The primary structure comprises 59 residues: Cecropin-C type 1 (59 aa).

The first 23 residues, 1 to 23, serve as a signal peptide directing secretion; sequence MNFTKIFVLIAMAALLLVGQSEA.

The protein localises to the secreted. Its function is as follows. Cecropins have lytic and antibacterial activity against several Gram-positive and Gram-negative bacteria. The sequence is that of Cecropin-C type 1 (CECC1) from Aedes albopictus (Asian tiger mosquito).